Consider the following 313-residue polypeptide: N(5)-(carboxyethyl)ornithine synthase (313 aa).

Residues Arg15, Lys71, and His92 each coordinate pyruvate. 171–176 provides a ligand contact to NADP(+); that stretch reads GSGNVA.

Belongs to the AlaDH/PNT family. CEOS subfamily. Homotetramer.

It catalyses the reaction N(5)-[1(S)-1-carboxyethyl]-L-ornithine + NADP(+) + H2O = L-ornithine + pyruvate + NADPH + H(+). With respect to regulation, is potently inhibited by the reaction product N(5)-(L-1-carboxyethyl)-L-ornithine. Functionally, catalyzes the NADPH-dependent reductive condensation between pyruvic acid and the side chain amino group of L-ornithine to form N(5)-(L-1-carboxyethyl)-L-ornithine. To a lesser extent, can also use L-lysine as substrate (yielding N(6)-(L-1-carboxyethyl)-L-lysine). NADH cannot replace NADPH in the condensation reaction. The polypeptide is N(5)-(carboxyethyl)ornithine synthase (ceo) (Lactococcus lactis subsp. lactis (Streptococcus lactis)).